The primary structure comprises 594 residues: Actin-histidine N-methyltransferase (594 aa).

The tract at residues 1 to 22 (MGKKSRVKTQKSGTGATATVSP) is disordered. The segment covering 10-20 (QKSGTGATATV) has biased composition (polar residues). S-adenosyl-L-methionine contacts are provided by residues Arg-75, 104–106 (EGF), Arg-254, 275–279 (DMCNH), and 325–327 (SGF). The SET domain maps to 94–314 (EGFEMVNFKE…AGDQIYIFYG (221 aa)). The tract at residues 551–594 (GLVNGENLIPNGTRSENESLSPEESENVTGEESSGSMAKVKERL) is disordered.

The protein belongs to the class V-like SAM-binding methyltransferase superfamily. SETD3 actin-histidine methyltransferase family. As to quaternary structure, interacts with MYOD1. In terms of processing, phosphorylated by GSK3B, which is required for recognition by the SCF(FBXW7) complex and subsequent degradation. Ubiquitinated by the SCF(FBXW7) complex following phosphorylation by GSK3B, leading to its degradation by the proteasome. As to expression, prominently expressed in the heart and skeletal muscles and is also detected weakly in the stomach, small intestine, and colon.

Its subcellular location is the cytoplasm. The protein localises to the nucleus. It catalyses the reaction L-histidyl-[protein] + S-adenosyl-L-methionine = N(tele)-methyl-L-histidyl-[protein] + S-adenosyl-L-homocysteine + H(+). In terms of biological role, protein-histidine N-methyltransferase that specifically mediates 3-methylhistidine (tele-methylhistidine) methylation of actin at 'His-73'. Histidine methylation of actin is required for smooth muscle contraction of the laboring uterus during delivery. Does not have protein-lysine N-methyltransferase activity and probably only catalyzes histidine methylation of actin. This Mus musculus (Mouse) protein is Actin-histidine N-methyltransferase.